Reading from the N-terminus, the 121-residue chain is uncharacterized protein (121 aa).

Disordered stretches follow at residues 1-28 and 60-81; these read MGCASAKHVATVQNEEEAQRGKSYQNGD and QENLEKSASSNTRLKTNKEIPG. Phosphoserine occurs at positions 95 and 115.

This is an uncharacterized protein from Mus musculus (Mouse).